A 151-amino-acid polypeptide reads, in one-letter code: Sigma factor binding protein 1, chloroplastic (151 aa).

Positions 1-13 (MESSSSTFLTTTS) are enriched in low complexity. Disordered stretches follow at residues 1–41 (MESS…KPIK) and 66–93 (TGQD…PPAE). A chloroplast-targeting transit peptide spans 1–54 (MESSSSTFLTTTSLDKKKPSPVSRKSPKQKKKTTSTNKPIKVRYISNPMRVQTC). The short motif at 16–32 (KKKPSPVSRKSPKQKKK) is the Bipartite nuclear localization signal element. Residues 58–67 (FRELVQELTG) carry the VQ motif.

In terms of assembly, interacts with the sigma factor SIGA in chloroplast. Interacts with WRKY25 and WRKY33 in the nucleus. In terms of tissue distribution, expressed in leaves and roots, but not in flowers.

The protein localises to the plastid. It is found in the chloroplast. Its subcellular location is the nucleus. Its function is as follows. Contributes to plant defense. May regulate chloroplast metabolism upon infection with pathogens such as Pseudomonas syringae. Functions as activator of WRKY33 in plant defense against necrotrophic pathogens by stimulating the DNA-binding activity of WRKY33. The protein is Sigma factor binding protein 1, chloroplastic (SIB1) of Arabidopsis thaliana (Mouse-ear cress).